A 304-amino-acid polypeptide reads, in one-letter code: Dihydroorotate dehydrogenase B (NAD(+)), catalytic subunit (304 aa).

FMN contacts are provided by residues Ser-20 and 44–45; that span reads KA. Substrate contacts are provided by residues Lys-44 and 68 to 72; that span reads NAIGL. Asn-98 and Asn-126 together coordinate FMN. Substrate is bound at residue Asn-126. The Nucleophile role is filled by Cys-129. 2 residues coordinate FMN: Lys-164 and Ile-190. Residue 191–192 coordinates substrate; sequence NT. Residues Gly-216, 242–243, and 264–265 contribute to the FMN site; these read GG and GT.

It belongs to the dihydroorotate dehydrogenase family. Type 1 subfamily. In terms of assembly, heterotetramer of 2 PyrK and 2 PyrD type B subunits. FMN is required as a cofactor.

It localises to the cytoplasm. It catalyses the reaction (S)-dihydroorotate + NAD(+) = orotate + NADH + H(+). The protein operates within pyrimidine metabolism; UMP biosynthesis via de novo pathway; orotate from (S)-dihydroorotate (NAD(+) route): step 1/1. In terms of biological role, catalyzes the conversion of dihydroorotate to orotate with NAD(+) as electron acceptor. This is Dihydroorotate dehydrogenase B (NAD(+)), catalytic subunit (pyrD) from Oceanobacillus iheyensis (strain DSM 14371 / CIP 107618 / JCM 11309 / KCTC 3954 / HTE831).